The sequence spans 82 residues: Small ribosomal subunit protein uS17 (82 aa).

It belongs to the universal ribosomal protein uS17 family. Part of the 30S ribosomal subunit.

Its function is as follows. One of the primary rRNA binding proteins, it binds specifically to the 5'-end of 16S ribosomal RNA. The polypeptide is Small ribosomal subunit protein uS17 (Shewanella sp. (strain W3-18-1)).